The chain runs to 273 residues: LOB domain-containing protein 20 (273 aa).

The segment covering 1-15 (MADQQRGHNTSDSRR) has biased composition (basic and acidic residues). A disordered region spans residues 1 to 39 (MADQQRGHNTSDSRRKSLAGKRTSQQTPTSSLSSGGVSM). The span at 23–39 (TSQQTPTSSLSSGGVSM) shows a compositional bias: low complexity. Residues 50 to 152 (SPCGACKFLR…AELSVVQSQL (103 aa)) enclose the LOB domain. The interval 221–248 (LEHSLQPMPPHQQRRGDYQHEDEEESGA) is disordered.

It belongs to the LOB domain-containing protein family. In terms of tissue distribution, expressed in roots and flowers.

This Arabidopsis thaliana (Mouse-ear cress) protein is LOB domain-containing protein 20 (LBD20).